An 860-amino-acid chain; its full sequence is Leucine--tRNA ligase (860 aa).

A 'HIGH' region motif is present at residues 42–52 (PYPSGRLHMGH). Positions 619-623 (KMSKS) match the 'KMSKS' region motif. An ATP-binding site is contributed by Lys622.

This sequence belongs to the class-I aminoacyl-tRNA synthetase family.

Its subcellular location is the cytoplasm. It catalyses the reaction tRNA(Leu) + L-leucine + ATP = L-leucyl-tRNA(Leu) + AMP + diphosphate. The protein is Leucine--tRNA ligase of Escherichia coli O127:H6 (strain E2348/69 / EPEC).